Reading from the N-terminus, the 103-residue chain is Protein translation factor SUI1 homolog (103 aa).

Belongs to the SUI1 family.

This Hyperthermus butylicus (strain DSM 5456 / JCM 9403 / PLM1-5) protein is Protein translation factor SUI1 homolog.